The following is an 89-amino-acid chain: Small ribosomal subunit protein uS15 (89 aa).

A compositionally biased stretch (basic and acidic residues) spans 1–21 (MSLHQERKSELVSKFRTHESD). Residues 1–25 (MSLHQERKSELVSKFRTHESDTGSP) form a disordered region.

This sequence belongs to the universal ribosomal protein uS15 family. Part of the 30S ribosomal subunit. Forms a bridge to the 50S subunit in the 70S ribosome, contacting the 23S rRNA.

Its function is as follows. One of the primary rRNA binding proteins, it binds directly to 16S rRNA where it helps nucleate assembly of the platform of the 30S subunit by binding and bridging several RNA helices of the 16S rRNA. In terms of biological role, forms an intersubunit bridge (bridge B4) with the 23S rRNA of the 50S subunit in the ribosome. In Myxococcus xanthus (strain DK1622), this protein is Small ribosomal subunit protein uS15.